Here is a 109-residue protein sequence, read N- to C-terminus: Putative double-stranded DNA mimic protein YciU (109 aa).

This sequence belongs to the putative dsDNA mimic protein family.

Its function is as follows. May act as a double-stranded DNA (dsDNA) mimic. Probably regulates the activity of a dsDNA-binding protein. The polypeptide is Putative double-stranded DNA mimic protein YciU (Shigella flexneri).